The following is a 373-amino-acid chain: MSNQDFYATLGVARAATDDEIKKAYRKLAMKYHPDRNPDNKEAEEKFKEVQKAYETLSDKEKRAMYDQYGHAAFEGGGQGGFGGFGGFGGAQGFDFGDIFSQMFGGGSGRAQPDYQGEDVQVGIEITLEEAAKGVKKRINIPTYEACDVCNGSGAKPGASPETCPTCKGSGTVHIQQAIFRMQQTCPTCRGAGKHIKEPCVKCRGVGRNKAVKTVEVNIPAGIDDGQRIRLSGEGGPGMHGAPAGDLYVTVRIRAHKIFQRDGLDLHCELPISFAMAALGGELEVPTLDGKVKLTVPKETQTGRRMRVKGKGVKSLRSSATGDLYCHIVVETPVNLTDRQKELLEEFERISTGLENQTPRKKSFLDKLRDLFD.

Residues 5-70 (DFYATLGVAR…EKRAMYDQYG (66 aa)) form the J domain. Residues 134–212 (GVKKRINIPT…CRGVGRNKAV (79 aa)) form a CR-type zinc finger. Zn(2+) contacts are provided by Cys147, Cys150, Cys164, Cys167, Cys186, Cys189, Cys200, and Cys203. 4 CXXCXGXG motif repeats span residues 147–154 (CDVCNGSG), 164–171 (CPTCKGSG), 186–193 (CPTCRGAG), and 200–207 (CVKCRGVG).

It belongs to the DnaJ family. Homodimer. It depends on Zn(2+) as a cofactor.

It is found in the cytoplasm. Its function is as follows. Participates actively in the response to hyperosmotic and heat shock by preventing the aggregation of stress-denatured proteins and by disaggregating proteins, also in an autonomous, DnaK-independent fashion. Unfolded proteins bind initially to DnaJ; upon interaction with the DnaJ-bound protein, DnaK hydrolyzes its bound ATP, resulting in the formation of a stable complex. GrpE releases ADP from DnaK; ATP binding to DnaK triggers the release of the substrate protein, thus completing the reaction cycle. Several rounds of ATP-dependent interactions between DnaJ, DnaK and GrpE are required for fully efficient folding. Also involved, together with DnaK and GrpE, in the DNA replication of plasmids through activation of initiation proteins. This Neisseria gonorrhoeae (strain ATCC 700825 / FA 1090) protein is Chaperone protein DnaJ.